The primary structure comprises 140 residues: Arsenate-mycothiol transferase ArsC1 (140 aa).

This sequence belongs to the low molecular weight phosphotyrosine protein phosphatase family.

It is found in the cytoplasm. It catalyses the reaction mycothiol + arsenate = arseno-mycothiol + H2O. Involved in defense against toxic arsenate. Involved in the mycothiol/myoredoxin redox pathway which uses a mycothioltransferase mechanism; facilitates adduct formation between arsenate and mycothiol. The protein is Arsenate-mycothiol transferase ArsC1 (arsC1) of Corynebacterium glutamicum (strain ATCC 13032 / K051).